The chain runs to 447 residues: NADH-quinone oxidoreductase subunit N (447 aa).

Helical transmembrane passes span 4–24, 27–47, 68–88, 92–112, 113–133, 146–166, 181–201, 215–235, 245–265, 280–300, 302–322, 342–362, and 376–395; these read FAALLPVILLGAGAVTAMLAA, LPGLARWIAGFALVAASVALA, LTGLVVCLSGIGSLAFLRPDG, EGPALLLLATLGGVVLTGAVH, AASLFLGLELITLALVALFVL, FLILGAAAAATLLMGLALGHA, ALLTFAAALLLAGLAFKLALV, PGAAAAFAGAASKVAVVTALV, VWALGLGTFAGVSILLGNLAA, VGHAGYIAAALATGAASAPAA, LFYIVTYAPALLAALCVAALI, GAAMAAALVSLAGLPVSAGFF, and AWALLALAIAGSALGAYYYL.

This sequence belongs to the complex I subunit 2 family. NDH-1 is composed of 14 different subunits. Subunits NuoA, H, J, K, L, M, N constitute the membrane sector of the complex.

It localises to the cell inner membrane. It carries out the reaction a quinone + NADH + 5 H(+)(in) = a quinol + NAD(+) + 4 H(+)(out). Its function is as follows. NDH-1 shuttles electrons from NADH, via FMN and iron-sulfur (Fe-S) centers, to quinones in the respiratory chain. The immediate electron acceptor for the enzyme in this species is believed to be ubiquinone. Couples the redox reaction to proton translocation (for every two electrons transferred, four hydrogen ions are translocated across the cytoplasmic membrane), and thus conserves the redox energy in a proton gradient. The protein is NADH-quinone oxidoreductase subunit N of Cereibacter sphaeroides (strain ATCC 17025 / ATH 2.4.3) (Rhodobacter sphaeroides).